A 228-amino-acid chain; its full sequence is Lactate utilization protein A (228 aa).

Belongs to the LutA/YkgE family.

In terms of biological role, is involved in L-lactate degradation and allows cells to grow with lactate as the sole carbon source. In Lysinibacillus sphaericus (strain C3-41), this protein is Lactate utilization protein A.